We begin with the raw amino-acid sequence, 92 residues long: Small ribosomal subunit protein uS19 (92 aa).

Belongs to the universal ribosomal protein uS19 family.

In terms of biological role, protein S19 forms a complex with S13 that binds strongly to the 16S ribosomal RNA. This Buchnera aphidicola subsp. Schizaphis graminum (strain Sg) protein is Small ribosomal subunit protein uS19.